Reading from the N-terminus, the 270-residue chain is Formamidopyrimidine-DNA glycosylase (270 aa).

P2 serves as the catalytic Schiff-base intermediate with DNA. E3 serves as the catalytic Proton donor. The Proton donor; for beta-elimination activity role is filled by K58. Positions 91, 110, and 151 each coordinate DNA. The segment at 236 to 270 (FVYGRGGENCKVCGTGLREIKLGQRASVYCPRCQS) adopts an FPG-type zinc-finger fold. Residue R260 is the Proton donor; for delta-elimination activity of the active site.

Belongs to the FPG family. In terms of assembly, monomer. The cofactor is Zn(2+).

It catalyses the reaction Hydrolysis of DNA containing ring-opened 7-methylguanine residues, releasing 2,6-diamino-4-hydroxy-5-(N-methyl)formamidopyrimidine.. It carries out the reaction 2'-deoxyribonucleotide-(2'-deoxyribose 5'-phosphate)-2'-deoxyribonucleotide-DNA = a 3'-end 2'-deoxyribonucleotide-(2,3-dehydro-2,3-deoxyribose 5'-phosphate)-DNA + a 5'-end 5'-phospho-2'-deoxyribonucleoside-DNA + H(+). Its function is as follows. Involved in base excision repair of DNA damaged by oxidation or by mutagenic agents. Acts as a DNA glycosylase that recognizes and removes damaged bases. Has a preference for oxidized purines, such as 7,8-dihydro-8-oxoguanine (8-oxoG). Has AP (apurinic/apyrimidinic) lyase activity and introduces nicks in the DNA strand. Cleaves the DNA backbone by beta-delta elimination to generate a single-strand break at the site of the removed base with both 3'- and 5'-phosphates. This is Formamidopyrimidine-DNA glycosylase from Pseudomonas fluorescens (strain ATCC BAA-477 / NRRL B-23932 / Pf-5).